The sequence spans 152 residues: Biogenesis of lysosome-related organelles complex 1 subunit 1 (152 aa).

Belongs to the BLOC1S1 family. As to quaternary structure, component of the biogenesis of lysosome-related organelles complex-1 (BLOC-1). Interacts with BLOS2 and SNX1. As to expression, expressed in the whole plant (at protein level).

Its subcellular location is the cytoplasm. The protein localises to the endosome. Its function is as follows. Component of the biogenesis of lysosome-related organelles complex-1 (BLOC-1), a complex that mediates the vacuolar degradative transport via the intracellular vesicle trafficking from the endosome to the vacuole. Probably regulates the PIN1 and PIN2 homeostasis through its interaction with SNX1. The chain is Biogenesis of lysosome-related organelles complex 1 subunit 1 (BLOS1) from Arabidopsis thaliana (Mouse-ear cress).